Here is a 290-residue protein sequence, read N- to C-terminus: 33 kDa chaperonin (290 aa).

Intrachain disulfides connect C235–C237 and C268–C271.

This sequence belongs to the HSP33 family. Under oxidizing conditions two disulfide bonds are formed involving the reactive cysteines. Under reducing conditions zinc is bound to the reactive cysteines and the protein is inactive.

The protein localises to the cytoplasm. Its function is as follows. Redox regulated molecular chaperone. Protects both thermally unfolding and oxidatively damaged proteins from irreversible aggregation. Plays an important role in the bacterial defense system toward oxidative stress. This Streptococcus mutans serotype c (strain ATCC 700610 / UA159) protein is 33 kDa chaperonin.